The sequence spans 196 residues: GTP cyclohydrolase-2 (196 aa).

49–53 contacts GTP; that stretch reads RIHSE. C54, C65, and C67 together coordinate Zn(2+). GTP is bound by residues Q70, 92-94, and T114; that span reads EGR. D126 functions as the Proton acceptor in the catalytic mechanism. The active-site Nucleophile is R128. 2 residues coordinate GTP: T149 and K154.

Belongs to the GTP cyclohydrolase II family. As to quaternary structure, homodimer. The cofactor is Zn(2+).

It catalyses the reaction GTP + 4 H2O = 2,5-diamino-6-hydroxy-4-(5-phosphoribosylamino)-pyrimidine + formate + 2 phosphate + 3 H(+). It functions in the pathway cofactor biosynthesis; riboflavin biosynthesis; 5-amino-6-(D-ribitylamino)uracil from GTP: step 1/4. In terms of biological role, catalyzes the conversion of GTP to 2,5-diamino-6-ribosylamino-4(3H)-pyrimidinone 5'-phosphate (DARP), formate and pyrophosphate. The protein is GTP cyclohydrolase-2 of Hamiltonella defensa subsp. Acyrthosiphon pisum (strain 5AT).